The sequence spans 398 residues: 4-hydroxy-3-methylbut-2-enyl diphosphate reductase (398 aa).

Cys-66 lines the [4Fe-4S] cluster pocket. His-96 lines the (2E)-4-hydroxy-3-methylbut-2-enyl diphosphate pocket. His-96 lines the dimethylallyl diphosphate pocket. An isopentenyl diphosphate-binding site is contributed by His-96. Cys-157 is a [4Fe-4S] cluster binding site. His-185 contributes to the (2E)-4-hydroxy-3-methylbut-2-enyl diphosphate binding site. Dimethylallyl diphosphate is bound at residue His-185. His-185 serves as a coordination point for isopentenyl diphosphate. Glu-187 (proton donor) is an active-site residue. Thr-250 is a binding site for (2E)-4-hydroxy-3-methylbut-2-enyl diphosphate. A [4Fe-4S] cluster-binding site is contributed by Cys-288. Ser-317, Ser-318, Asn-319, and Ser-379 together coordinate (2E)-4-hydroxy-3-methylbut-2-enyl diphosphate. Positions 317, 318, 319, and 379 each coordinate dimethylallyl diphosphate. Residues Ser-317, Ser-318, Asn-319, and Ser-379 each coordinate isopentenyl diphosphate.

This sequence belongs to the IspH family. The cofactor is [4Fe-4S] cluster.

The enzyme catalyses isopentenyl diphosphate + 2 oxidized [2Fe-2S]-[ferredoxin] + H2O = (2E)-4-hydroxy-3-methylbut-2-enyl diphosphate + 2 reduced [2Fe-2S]-[ferredoxin] + 2 H(+). It carries out the reaction dimethylallyl diphosphate + 2 oxidized [2Fe-2S]-[ferredoxin] + H2O = (2E)-4-hydroxy-3-methylbut-2-enyl diphosphate + 2 reduced [2Fe-2S]-[ferredoxin] + 2 H(+). It participates in isoprenoid biosynthesis; dimethylallyl diphosphate biosynthesis; dimethylallyl diphosphate from (2E)-4-hydroxy-3-methylbutenyl diphosphate: step 1/1. The protein operates within isoprenoid biosynthesis; isopentenyl diphosphate biosynthesis via DXP pathway; isopentenyl diphosphate from 1-deoxy-D-xylulose 5-phosphate: step 6/6. Catalyzes the conversion of 1-hydroxy-2-methyl-2-(E)-butenyl 4-diphosphate (HMBPP) into a mixture of isopentenyl diphosphate (IPP) and dimethylallyl diphosphate (DMAPP). Acts in the terminal step of the DOXP/MEP pathway for isoprenoid precursor biosynthesis. In Synechococcus sp. (strain CC9311), this protein is 4-hydroxy-3-methylbut-2-enyl diphosphate reductase.